The chain runs to 345 residues: Beta-hexosaminidase (345 aa).

Substrate is bound by residues D60, R68, R132, and 162–163 (KH). The active-site Proton donor/acceptor is H175. D247 (nucleophile) is an active-site residue.

Belongs to the glycosyl hydrolase 3 family. NagZ subfamily.

The protein resides in the cytoplasm. The catalysed reaction is Hydrolysis of terminal non-reducing N-acetyl-D-hexosamine residues in N-acetyl-beta-D-hexosaminides.. It participates in cell wall biogenesis; peptidoglycan recycling. Functionally, plays a role in peptidoglycan recycling by cleaving the terminal beta-1,4-linked N-acetylglucosamine (GlcNAc) from peptide-linked peptidoglycan fragments, giving rise to free GlcNAc, anhydro-N-acetylmuramic acid and anhydro-N-acetylmuramic acid-linked peptides. This chain is Beta-hexosaminidase, found in Actinobacillus pleuropneumoniae serotype 3 (strain JL03).